Reading from the N-terminus, the 847-residue chain is MVIPATSRFGFRAEFNTKEFQASCISLANEIDAAIGRNEVPGNIQELALILNNVCRRKCDDYQTRAVVMALMISVKSACQLGWFPERETQELLAIIDLMWNGFSCPENVTSCVNSPVTLISQVIERFYPCVKLGHILVSFEAKPESKMMMKDFHISKKMPHSPKQKVGLFVVRTEDISRSNCIVHPQGVSFLLNGKGIDKRVNISMESGPQLPTNVTALLNLGANLLQAIGCFGGSYLIAIAFMDVIPLPNKPLLKDYVHPEVVGSNSDCDIIEGPSRISLSCPISRTRIKLPVKGHVCKHLQCFDFWNYVNMNTRRPSWRCPHCNQSVCYTDIRVDQKLRKILEEVGRNAADVVISADGTWMVETENDEDVELVPETTHDHGDPNSFINLGPTVKNPARDENEMETSTQVEEHNPCLSEIQGPSNDTHRPASDYTMLNQSHTSTNTLPQLPRTLNAFDGQQFVNLPQVINTRDSPASQALPMTFSPTPSPQDILATNAANFGTSMPAAQSSQFQGSHVTSLGNCEGRTSDLMARWNHIYGRVQTQFPPAPLSHHHYSMQNQSPSPAQQRPVPSYIAHPQTFHVNYGENADQRWMPSSIAHPQTLPVNYGGNTNQRPIPSSIAHPQTLPVNYRGNTDHRSTPYSITHLQTLLNYGGNADQRPMPSSITNLQTLPATYGGYAHQRPMSSSITHPRTSPVNYGGTPDQRPMPSSITHPQTLPVSYGGTTDQILNPGGAMGQFSSREFMNLTPANTENWRPQSRMRGSVAPGTGYDHMIIHPTRPVHPQAQTPPAPLSTSYDGADEIQAFIGHPSYPVSNNETQAGTSSLPVAEGLGYSGSFWSMPPETW.

The interacting domain (IND), required for interaction with MOM1 and PIAL2 stretch occupies residues 113–271 (VNSPVTLISQ…EVVGSNSDCD (159 aa)). The segment at 268–349 (SDCDIIEGPS…LRKILEEVGR (82 aa)) adopts an SP-RING-type zinc-finger fold. Residues Cys-299, His-301, Cys-322, and Cys-325 each coordinate Zn(2+). Tandem repeats lie at residues 569 to 591 (QRPVPSYIAHPQTFHVNYGENAD), 592 to 614 (QRWMPSSIAHPQTLPVNYGGNTN), 615 to 637 (QRPIPSSIAHPQTLPVNYRGNTD), 638 to 659 (HRSTPYSITHLQTLLNYGGNAD), 660 to 682 (QRPMPSSITNLQTLPATYGGYAH), 683 to 705 (QRPMSSSITHPRTSPVNYGGTPD), and 706 to 728 (QRPMPSSITHPQTLPVSYGGTTD). The interval 569 to 728 (QRPVPSYIAH…LPVSYGGTTD (160 aa)) is 7 X 23 AA approximate tandem repeats.

It belongs to the PIAL protein ligase family. As to quaternary structure, homodimer. Interacts with MOM1 and PIAL2 to form a high molecular mass complex which mediates transcriptional gene silencing at heterochromatin regions. Expressed in leaves, stems and flowers, and, at low levels, in siliques and old leaves.

The protein resides in the nucleus. It participates in protein modification; protein sumoylation. Its function is as follows. Together with MOM1 and PIAL2, regulates transcriptional gene silencing (TGS) independently of changes in DNA methylation. E4-type SUMO ligase that promotes SUMO chain formation in a SCE1-dependent manner and thus contributes to a pathway for proteolytic removal of sumoylation substrates. Involved in stress responses (e.g. osmotic, salt and abscisic acid ABA) and sulfur metabolism. The polypeptide is E4 SUMO-protein ligase PIAL1 (Arabidopsis thaliana (Mouse-ear cress)).